We begin with the raw amino-acid sequence, 372 residues long: Dual-specificity RNA methyltransferase RlmN (372 aa).

The active-site Proton acceptor is E92. The 240-residue stretch at 98-337 folds into the Radical SAM core domain; the sequence is ETDRATLCVS…VILRKTRGDD (240 aa). Cysteines 105 and 342 form a disulfide. The [4Fe-4S] cluster site is built by C112, C116, and C119. S-adenosyl-L-methionine-binding positions include 166-167, S198, 220-222, and N299; these read GE and SLH. The active-site S-methylcysteine intermediate is C342.

The protein belongs to the radical SAM superfamily. RlmN family. [4Fe-4S] cluster serves as cofactor.

The protein resides in the cytoplasm. The enzyme catalyses adenosine(2503) in 23S rRNA + 2 reduced [2Fe-2S]-[ferredoxin] + 2 S-adenosyl-L-methionine = 2-methyladenosine(2503) in 23S rRNA + 5'-deoxyadenosine + L-methionine + 2 oxidized [2Fe-2S]-[ferredoxin] + S-adenosyl-L-homocysteine. It catalyses the reaction adenosine(37) in tRNA + 2 reduced [2Fe-2S]-[ferredoxin] + 2 S-adenosyl-L-methionine = 2-methyladenosine(37) in tRNA + 5'-deoxyadenosine + L-methionine + 2 oxidized [2Fe-2S]-[ferredoxin] + S-adenosyl-L-homocysteine. Specifically methylates position 2 of adenine 2503 in 23S rRNA and position 2 of adenine 37 in tRNAs. m2A2503 modification seems to play a crucial role in the proofreading step occurring at the peptidyl transferase center and thus would serve to optimize ribosomal fidelity. The protein is Dual-specificity RNA methyltransferase RlmN of Histophilus somni (strain 129Pt) (Haemophilus somnus).